A 182-amino-acid polypeptide reads, in one-letter code: MKEELIRMILEEECIKFGHFILTSGKESSYYIDIKKLITNPKALRLIARLIKEKAEEEGIQFDKVAGPELGAVPIATALALETDRPLLIVRKKKKEHGTGRQIEGEVKEGDRVLLVEDVTTTGGSVLRAAKILKEAGAEITGIFVVVDREEGAKEAIEKEGFKLYPLVLVHELFEAAGVSSE.

5-phospho-alpha-D-ribose 1-diphosphate-binding positions include arginine 91, lysine 92, lysine 95, histidine 97, and 117-125 (EDVTTTGGS). Threonine 121 and arginine 149 together coordinate orotate.

It belongs to the purine/pyrimidine phosphoribosyltransferase family. PyrE subfamily. In terms of assembly, homodimer. The cofactor is Mg(2+).

The catalysed reaction is orotidine 5'-phosphate + diphosphate = orotate + 5-phospho-alpha-D-ribose 1-diphosphate. Its pathway is pyrimidine metabolism; UMP biosynthesis via de novo pathway; UMP from orotate: step 1/2. Functionally, catalyzes the transfer of a ribosyl phosphate group from 5-phosphoribose 1-diphosphate to orotate, leading to the formation of orotidine monophosphate (OMP). This chain is Orotate phosphoribosyltransferase, found in Pyrococcus furiosus (strain ATCC 43587 / DSM 3638 / JCM 8422 / Vc1).